The primary structure comprises 986 residues: Ephrin type-B receptor 2 (986 aa).

Positions 1 to 18 are cleaved as a signal peptide; the sequence is MAVRRLGAALLLLPLLAA. Topologically, residues 19–543 are extracellular; sequence VEETLMDSTT…QTSIKEKLPL (525 aa). Residues 20-202 form the Eph LBD domain; the sequence is EETLMDSTTA…FYRKCPRIIQ (183 aa). Intrachain disulfides connect cysteine 62/cysteine 184 and cysteine 97/cysteine 107. N-linked (GlcNAc...) asparagine glycans are attached at residues asparagine 265, asparagine 336, asparagine 428, and asparagine 482. Fibronectin type-III domains follow at residues 324 to 434 and 435 to 530; these read IPSA…TNQA and APSA…TMTE. Residues 544–564 form a helical membrane-spanning segment; sequence IVGSSAAGLVFLIAVVVIAIV. At 565–986 the chain is on the cytoplasmic side; sequence CNRRGFERAD…QMNQIQSVEV (422 aa). The 264-residue stretch at 621–884 folds into the Protein kinase domain; the sequence is VKIEQVIGAG…QIVNTLDKMI (264 aa). ATP is bound by residues 627–635 and lysine 653; that span reads IGAGEFGEV. Aspartate 746 acts as the Proton acceptor in catalysis. Residue lysine 891 forms a Glycyl lysine isopeptide (Lys-Gly) (interchain with G-Cter in ubiquitin) linkage. In terms of domain architecture, SAM spans 913 to 977; that stretch reads TSFNTVDEWL…LNSIQVMRAQ (65 aa). The PDZ-binding signature appears at 984–986; the sequence is VEV.

The protein belongs to the protein kinase superfamily. Tyr protein kinase family. Ephrin receptor subfamily. Heterotetramer upon binding of the ligand. The heterotetramer is composed of an ephrin dimer and a receptor dimer. Interacts (via PDZ-binding motif) with GRIP1 and PICK1 (via PDZ domain). Interacts with ARHGEF15; mediates ARHGEF15 phosphorylation, ubiquitination and degradation by the proteasome. Interacts with AQP1; involved in endolymph production in the inner ear. Interacts with EFNA5. Interacts with SPSB1. Interacts with SPSB4. Interacts with SH2D3C. In terms of processing, autophosphorylated; ligand binding stimulates autophosphorylation on tyrosine residues. Post-translationally, ligand binding induces cleavage by matrix metalloproteinases (MMPs) such as MMP7/MMP9, producing an EphB2/N-terminal fragment (NTF) and a C-terminal long fragment (EphB2-LF). EphB2-LF is further cleaved by MMPs, producing EphB2/CTF1 which is further cleaved by the PS1/gamma-secretase producing EphB2/CTF2. Polyubiquitinated; ligand binding stimulates ubiquitination. Ubiquitinated by RNF186 at Lys-891, mainly through 'Lys-27'-linked polyubiquitin chains. Ubiquitinated by CRL2(KLHDC2) E3 ligase complex. Expressed in the epithelial dark cells of the inner ear. Expressed in the region of the proximal tubules of the kidney nephron. Expressed in myogenic progenitor cells.

The protein localises to the cell membrane. It is found in the cell projection. Its subcellular location is the axon. The protein resides in the dendrite. It catalyses the reaction L-tyrosyl-[protein] + ATP = O-phospho-L-tyrosyl-[protein] + ADP + H(+). In terms of biological role, receptor tyrosine kinase which binds promiscuously transmembrane ephrin-B family ligands residing on adjacent cells, leading to contact-dependent bidirectional signaling into neighboring cells. The signaling pathway downstream of the receptor is referred to as forward signaling while the signaling pathway downstream of the ephrin ligand is referred to as reverse signaling. Functions in axon guidance during development. Involved in the guidance of commissural axons, that form a major interhemispheric connection between the 2 temporal lobes of the cerebral cortex. Also involved in guidance of contralateral inner ear efferent growth cones at the midline and of retinal ganglion cell axons to the optic disk. In addition to axon guidance, also regulates dendritic spines development and maturation and stimulates the formation of excitatory synapses. Upon activation by EFNB1, abolishes the ARHGEF15-mediated negative regulation on excitatory synapse formation. Controls other aspects of development including angiogenesis, palate development and in inner ear development through regulation of endolymph production. Forward and reverse signaling through the EFNB2/EPHB2 complex regulate movement and adhesion of cells that tubularize the urethra and septate the cloaca. May function as a tumor suppressor. May be involved in the regulation of platelet activation and blood coagulation. In Mus musculus (Mouse), this protein is Ephrin type-B receptor 2.